The primary structure comprises 74 residues: Cytochrome c oxidase subunit 6C (74 aa).

Residues 2-12 (STALAKPQMRG) are Mitochondrial matrix-facing. A helical transmembrane segment spans residues 13–53 (LLARRLRFHIVGAFMVSLGFATFYKFAVAEKRKKAYADFYR). Topologically, residues 54-74 (NYDSMKDFEEMRKAGIFQSAK) are mitochondrial intermembrane.

Belongs to the cytochrome c oxidase subunit 6c family. In terms of assembly, component of the cytochrome c oxidase (complex IV, CIV), a multisubunit enzyme composed of 14 subunits. The complex is composed of a catalytic core of 3 subunits MT-CO1, MT-CO2 and MT-CO3, encoded in the mitochondrial DNA, and 11 supernumerary subunits COX4I1 (or COX4I2), COX5A, COX5B, COX6A2 (or COX6A1), COX6B1 (or COX6B2), COX6C, COX7A1 (or COX7A2), COX7B, COX7C, COX8B and NDUFA4, which are encoded in the nuclear genome. The complex exists as a monomer or a dimer and forms supercomplexes (SCs) in the inner mitochondrial membrane with NADH-ubiquinone oxidoreductase (complex I, CI) and ubiquinol-cytochrome c oxidoreductase (cytochrome b-c1 complex, complex III, CIII), resulting in different assemblies (supercomplex SCI(1)III(2)IV(1) and megacomplex MCI(2)III(2)IV(2)).

The protein localises to the mitochondrion inner membrane. Its pathway is energy metabolism; oxidative phosphorylation. Component of the cytochrome c oxidase, the last enzyme in the mitochondrial electron transport chain which drives oxidative phosphorylation. The respiratory chain contains 3 multisubunit complexes succinate dehydrogenase (complex II, CII), ubiquinol-cytochrome c oxidoreductase (cytochrome b-c1 complex, complex III, CIII) and cytochrome c oxidase (complex IV, CIV), that cooperate to transfer electrons derived from NADH and succinate to molecular oxygen, creating an electrochemical gradient over the inner membrane that drives transmembrane transport and the ATP synthase. Cytochrome c oxidase is the component of the respiratory chain that catalyzes the reduction of oxygen to water. Electrons originating from reduced cytochrome c in the intermembrane space (IMS) are transferred via the dinuclear copper A center (CU(A)) of subunit 2 and heme A of subunit 1 to the active site in subunit 1, a binuclear center (BNC) formed by heme A3 and copper B (CU(B)). The BNC reduces molecular oxygen to 2 water molecules using 4 electrons from cytochrome c in the IMS and 4 protons from the mitochondrial matrix. In Bos taurus (Bovine), this protein is Cytochrome c oxidase subunit 6C (COX6C).